The following is a 153-amino-acid chain: Histone H2B.3 (153 aa).

2 stretches are compositionally biased toward basic and acidic residues: residues M1–A10 and A20–K54. The interval M1 to K60 is disordered. An N6-acetyllysine mark is found at K41 and K42. Residue K149 forms a Glycyl lysine isopeptide (Lys-Gly) (interchain with G-Cter in ubiquitin) linkage.

The protein belongs to the histone H2B family. The nucleosome is a histone octamer containing two molecules each of H2A, H2B, H3 and H4 assembled in one H3-H4 heterotetramer and two H2A-H2B heterodimers. The octamer wraps approximately 147 bp of DNA. The N-terminus is blocked. In terms of processing, can be acetylated to form H2BK33ac and H2BK34ac. Acetylated mainly on the ubiquitinated form. Post-translationally, monoubiquitinated to form H2BK143ub1; which is increased during the light period and may give a specific tag for epigenetic transcriptional activation.

It localises to the nucleus. It is found in the chromosome. Core component of nucleosome. Nucleosomes wrap and compact DNA into chromatin, limiting DNA accessibility to the cellular machineries which require DNA as a template. Histones thereby play a central role in transcription regulation, DNA repair, DNA replication and chromosomal stability. DNA accessibility is regulated via a complex set of post-translational modifications of histones, also called histone code, and nucleosome remodeling. This is Histone H2B.3 from Chlamydomonas reinhardtii (Chlamydomonas smithii).